Reading from the N-terminus, the 1133-residue chain is Exportin-4 (1133 aa).

The protein belongs to the exportin family. In terms of assembly, interacts with Ran and cargo proteins in a GTP-dependent manner.

The protein resides in the cytoplasm. The protein localises to the nucleus. Its function is as follows. Mediates the nuclear export of proteins (cargos). In the nucleus binds cooperatively to its cargo and to the GTPase Ran in its active GTP-bound form. Docking of this trimeric complex to the nuclear pore complex (NPC) is mediated through binding to nucleoporins. Upon transit of a nuclear export complex into the cytoplasm, disassembling of the complex and hydrolysis of Ran-GTP to Ran-GDP cause release of the cargo from the export receptor. Xpo4 then return to the nuclear compartment and mediate another round of transport. The directionality of nuclear export is thought to be conferred by an asymmetric distribution of the GTP- and GDP-bound forms of Ran between the cytoplasm and nucleus. In Dictyostelium discoideum (Social amoeba), this protein is Exportin-4 (xpo4).